The primary structure comprises 188 residues: ATP synthase subunit delta (188 aa).

The protein belongs to the ATPase delta chain family. F-type ATPases have 2 components, F(1) - the catalytic core - and F(0) - the membrane proton channel. F(1) has five subunits: alpha(3), beta(3), gamma(1), delta(1), epsilon(1). F(0) has three main subunits: a(1), b(2) and c(10-14). The alpha and beta chains form an alternating ring which encloses part of the gamma chain. F(1) is attached to F(0) by a central stalk formed by the gamma and epsilon chains, while a peripheral stalk is formed by the delta and b chains.

It localises to the cell inner membrane. Its function is as follows. F(1)F(0) ATP synthase produces ATP from ADP in the presence of a proton or sodium gradient. F-type ATPases consist of two structural domains, F(1) containing the extramembraneous catalytic core and F(0) containing the membrane proton channel, linked together by a central stalk and a peripheral stalk. During catalysis, ATP synthesis in the catalytic domain of F(1) is coupled via a rotary mechanism of the central stalk subunits to proton translocation. Functionally, this protein is part of the stalk that links CF(0) to CF(1). It either transmits conformational changes from CF(0) to CF(1) or is implicated in proton conduction. This Sinorhizobium medicae (strain WSM419) (Ensifer medicae) protein is ATP synthase subunit delta.